A 423-amino-acid chain; its full sequence is Cytochrome c biogenesis protein Ccs1 (423 aa).

3 consecutive transmembrane segments (helical) span residues 11-31 (LKFAIALLLLISITITFGSII), 70-90 (NFWFISLLLSLGISLIACTFF), and 153-173 (IAPVFVHLSIILILLGSIFAS).

This sequence belongs to the Ccs1/CcsB family. In terms of assembly, may interact with CcsA.

It is found in the plastid. It localises to the chloroplast thylakoid membrane. Its function is as follows. Required during biogenesis of c-type cytochromes (cytochrome c6 and cytochrome f) at the step of heme attachment. The chain is Cytochrome c biogenesis protein Ccs1 from Heterosigma akashiwo (strain NIES-293 / 8280G21-1).